The following is a 182-amino-acid chain: MGIHAEQPKESIEEQIQRLCATVPDYPEPGITFRDLTPVFADGAALRAVVDALVEPFAGQFDAVAGVEARGFLLAAAAAYATGTGVITVRKAGKLPRAVYTEHYSLEYGTAALELHRDDLPAGSRVLILDDVLATGGTLAATSKLFAKAGVNVAGYGVVLELAELHGREALAGHQIRSLVRL.

The protein belongs to the purine/pyrimidine phosphoribosyltransferase family. In terms of assembly, homodimer.

Its subcellular location is the cytoplasm. It carries out the reaction AMP + diphosphate = 5-phospho-alpha-D-ribose 1-diphosphate + adenine. It participates in purine metabolism; AMP biosynthesis via salvage pathway; AMP from adenine: step 1/1. In terms of biological role, catalyzes a salvage reaction resulting in the formation of AMP, that is energically less costly than de novo synthesis. The sequence is that of Adenine phosphoribosyltransferase from Renibacterium salmoninarum (strain ATCC 33209 / DSM 20767 / JCM 11484 / NBRC 15589 / NCIMB 2235).